The sequence spans 81 residues: Protein Vpu (81 aa).

Topologically, residues 1–7 (MQSLQVL) are extracellular. Residues 8–28 (AIVALVVATIIAIVVWTIVFI) traverse the membrane as a helical segment. Residues 29 to 81 (EYRKILRQRKIDRLINRITERAEDSGNESDGDQEELSALVERGHLAPWDVDDL) are Cytoplasmic-facing. Residues 50-81 (AEDSGNESDGDQEELSALVERGHLAPWDVDDL) form a disordered region. A phosphoserine; by host CK2 mark is found at Ser53 and Ser57. The segment covering 53–63 (SGNESDGDQEE) has biased composition (acidic residues).

Belongs to the HIV-1 VPU protein family. Homopentamer. Interacts with host CD4 and BRTC; these interactions induce proteasomal degradation of CD4. Interacts with host BST2; this interaction leads to the degradation of host BST2. Interacts with host FBXW11. Interacts with host AP1M1; this interaction plays a role in the mistrafficking and subsequent degradation of host BST2. Interacts with host RANBP2; this interaction allows Vpu to down-regulate host BLM sumoylation. Post-translationally, phosphorylated by host CK2. This phosphorylation is necessary for interaction with human BTRC and degradation of CD4.

It localises to the host membrane. With respect to regulation, ion channel activity is inhibited by hexamethylene amiloride in vitro. Enhances virion budding by targeting host CD4 and Tetherin/BST2 to proteasome degradation. Degradation of CD4 prevents any unwanted premature interactions between viral Env and its host receptor CD4 in the endoplasmic reticulum. Degradation of antiretroviral protein Tetherin/BST2 is important for virion budding, as BST2 tethers new viral particles to the host cell membrane. Mechanistically, Vpu bridges either CD4 or BST2 to BTRC, a substrate recognition subunit of the Skp1/Cullin/F-box protein E3 ubiquitin ligase, induces their ubiquitination and subsequent proteasomal degradation. The alteration of the E3 ligase specificity by Vpu seems to promote the degradation of host IKBKB, leading to NF-kappa-B down-regulation and subsequent apoptosis. Acts as a viroporin that forms an oligomeric ion channel in membranes. Modulates the host DNA repair mechanisms to promote degradation of nuclear viral cDNA in cells that are already productively infected in order to suppress immune sensing and proviral hyper-integration (superinfection). Manipulates PML-NBs and modulates SUMOylation of host BLM protein thereby enhancing its DNA-end processing activity toward viral unintegrated linear DNA. Also inhibits RAD52-mediated homologous repair of viral cDNA, preventing the generation of dead-end circular forms of single copies of the long terminal repeat and permitting sustained nucleolytic attack. In Human immunodeficiency virus type 1 group M subtype B (isolate YU-2) (HIV-1), this protein is Protein Vpu.